Reading from the N-terminus, the 398-residue chain is Phospholipase C (398 aa).

The signal sequence occupies residues 1-26 (MKALKKVSNILCVLGLCTLMGGTSYA). Residues Trp-27, His-37, Asp-82, His-94, His-152, Asp-156, His-162, His-174, and Glu-178 each coordinate Zn(2+). In terms of domain architecture, Zn-dependent PLC spans 27-276 (WDGKKDGTGT…NEVSNGNTGD (250 aa)). The segment at 273–281 (NTGDNDSLT) is linker. The region spanning 282–398 (NEFNIVLKTA…TGNETYYINK (117 aa)) is the PLAT domain. Gly-297, Thr-298, Asp-299, Asp-319, Asn-320, Gly-322, Asn-323, Asp-324, and Asp-363 together coordinate Ca(2+).

It belongs to the bacterial zinc-metallophospholipase C family. Ca(2+) serves as cofactor. The cofactor is Zn(2+).

It localises to the secreted. The catalysed reaction is a 1,2-diacyl-sn-glycero-3-phosphocholine + H2O = phosphocholine + a 1,2-diacyl-sn-glycerol + H(+). Bacterial hemolysins are exotoxins that attack blood cell membranes and cause cell rupture. Binds to eukaryotic membranes where it hydrolyzes phosphatidylcholine. This enzyme has 10-fold less activity towards sphingomyelin than its C.perfringens counterpart, is approximately 100-fold less hemolytic against mouse erythrocytes and at least 100-fold less toxic in mice. This is Phospholipase C (plc) from Paraclostridium bifermentans (Clostridium bifermentans).